Reading from the N-terminus, the 203-residue chain is uncharacterized protein (203 aa).

It belongs to the DadA oxidoreductase family.

Either a functional dehydrogenase or a non-functional fragment. This is an uncharacterized protein from Sinorhizobium fredii (strain NBRC 101917 / NGR234).